The chain runs to 194 residues: MFIPYVIEKSSRGERSYDIYSRLLKDRIIMLSGEIHDELAASIVAQLLFLEAEDPTKDIYLYINSPGGVITSGFSIYDTMNYIKPDVCTICIGQAASMGAFLLSCGAEGKRFALPNSRIMIHQPLGGARGQATDIEIQAKEILRLKTILNDILAKNTKQKVAKIAKDTERDFFMSTQEAKEYGLIDKVLEKSFK.

Serine 97 (nucleophile) is an active-site residue. Residue histidine 122 is part of the active site.

This sequence belongs to the peptidase S14 family. In terms of assembly, fourteen ClpP subunits assemble into 2 heptameric rings which stack back to back to give a disk-like structure with a central cavity, resembling the structure of eukaryotic proteasomes.

It is found in the cytoplasm. The enzyme catalyses Hydrolysis of proteins to small peptides in the presence of ATP and magnesium. alpha-casein is the usual test substrate. In the absence of ATP, only oligopeptides shorter than five residues are hydrolyzed (such as succinyl-Leu-Tyr-|-NHMec, and Leu-Tyr-Leu-|-Tyr-Trp, in which cleavage of the -Tyr-|-Leu- and -Tyr-|-Trp bonds also occurs).. In terms of biological role, cleaves peptides in various proteins in a process that requires ATP hydrolysis. Has a chymotrypsin-like activity. Plays a major role in the degradation of misfolded proteins. This is ATP-dependent Clp protease proteolytic subunit from Campylobacter jejuni subsp. jejuni serotype O:23/36 (strain 81-176).